A 426-amino-acid polypeptide reads, in one-letter code: Serine--tRNA ligase (426 aa).

233 to 235 lines the L-serine pocket; sequence TSE. 264–266 contributes to the ATP binding site; the sequence is RSE. Glutamate 287 provides a ligand contact to L-serine. 351 to 354 contacts ATP; the sequence is EISS. Serine 387 lines the L-serine pocket.

This sequence belongs to the class-II aminoacyl-tRNA synthetase family. Type-1 seryl-tRNA synthetase subfamily. Homodimer. The tRNA molecule binds across the dimer.

The protein resides in the cytoplasm. It carries out the reaction tRNA(Ser) + L-serine + ATP = L-seryl-tRNA(Ser) + AMP + diphosphate + H(+). The enzyme catalyses tRNA(Sec) + L-serine + ATP = L-seryl-tRNA(Sec) + AMP + diphosphate + H(+). It functions in the pathway aminoacyl-tRNA biosynthesis; selenocysteinyl-tRNA(Sec) biosynthesis; L-seryl-tRNA(Sec) from L-serine and tRNA(Sec): step 1/1. Catalyzes the attachment of serine to tRNA(Ser). Is also able to aminoacylate tRNA(Sec) with serine, to form the misacylated tRNA L-seryl-tRNA(Sec), which will be further converted into selenocysteinyl-tRNA(Sec). This is Serine--tRNA ligase from Xylella fastidiosa (strain M12).